Consider the following 601-residue polypeptide: Probable N-acetylgalactosaminyltransferase 7 (601 aa).

Residues 1-20 (MIIARKKLQLQRLWRQRGCR) are Cytoplasmic-facing. The chain crosses the membrane as a helical; Signal-anchor for type II membrane protein span at residues 21 to 38 (VATYICLGVLVLFGFVYN). Topologically, residues 39 to 601 (SKGNSMSSIK…FVWKEFYQSS (563 aa)) are lumenal. Residues 61–108 (DLTNKELPGGPDPNTIFRGSELGNYEPKEPEIPSNQPGEHGKPVPVTD) form a disordered region. N-linked (GlcNAc...) asparagine glycosylation is present at asparagine 135. Cystine bridges form between cysteine 146-cysteine 382, cysteine 373-cysteine 452, cysteine 490-cysteine 506, cysteine 529-cysteine 542, and cysteine 568-cysteine 583. The interval 155 to 265 (LPTVSVVVVF…TNWLPPLLAP (111 aa)) is catalytic subdomain A. Positions 196 and 226 each coordinate substrate. 2 residues coordinate Mn(2+): aspartate 249 and histidine 251. The catalytic subdomain B stretch occupies residues 328–390 (PFRSPTHAGG…PCSHVGHVYR (63 aa)). Residue tryptophan 359 coordinates substrate. Residue histidine 387 participates in Mn(2+) binding. Substrate is bound by residues arginine 390 and tyrosine 395. The 119-residue stretch at 477 to 595 (DVWGEARNPA…DNERQKFVWK (119 aa)) folds into the Ricin B-type lectin domain.

This sequence belongs to the glycosyltransferase 2 family. GalNAc-T subfamily. It depends on Mn(2+) as a cofactor.

It localises to the golgi apparatus membrane. Its pathway is protein modification; protein glycosylation. Functionally, probable glycopeptide transferase involved in O-linked oligosaccharide biosynthesis. Glycopeptide transferases catalyze the transfer of an N-acetyl-D-galactosamine residue to an already glycosylated peptide. In contrast to other members of the family, it does not act as a peptide transferase that transfers GalNAc onto serine or threonine residue on peptides that have been tested. Some peptide transferase activity is however not excluded, considering that its appropriate peptide substrate may remain unidentified. This Caenorhabditis elegans protein is Probable N-acetylgalactosaminyltransferase 7 (gly-7).